The primary structure comprises 470 residues: Membrane-bound lytic murein transglycosylase F (470 aa).

The N-terminal stretch at 1-21 (MLKEKLIIIITLVMLLCACDI) is a signal peptide. The interval 22–259 (QEQSTQLAQI…VLEEKYFGHV (238 aa)) is non-LT domain. The tract at residues 260–470 (RQFNYVNTLA…PKIGDEVEAK (211 aa)) is LT domain. The active site involves Glu-304.

This sequence in the N-terminal section; belongs to the bacterial solute-binding protein 3 family. It in the C-terminal section; belongs to the transglycosylase Slt family.

It is found in the cell outer membrane. It catalyses the reaction Exolytic cleavage of the (1-&gt;4)-beta-glycosidic linkage between N-acetylmuramic acid (MurNAc) and N-acetylglucosamine (GlcNAc) residues in peptidoglycan, from either the reducing or the non-reducing ends of the peptidoglycan chains, with concomitant formation of a 1,6-anhydrobond in the MurNAc residue.. Functionally, murein-degrading enzyme that degrades murein glycan strands and insoluble, high-molecular weight murein sacculi, with the concomitant formation of a 1,6-anhydromuramoyl product. Lytic transglycosylases (LTs) play an integral role in the metabolism of the peptidoglycan (PG) sacculus. Their lytic action creates space within the PG sacculus to allow for its expansion as well as for the insertion of various structures such as secretion systems and flagella. The sequence is that of Membrane-bound lytic murein transglycosylase F from Pseudoalteromonas translucida (strain TAC 125).